A 186-amino-acid polypeptide reads, in one-letter code: MSSFRLGVSRVARQVRAPCVRNTRRYASDSHAPADHTHSAAGHGEHHHANAADANEELGTAFYVIFGAIPAFGALYYFSRPGKDGQPNSITKWLQKWEEHQEALADKNALVTAALEQAAHDKHLFYYVDQLRSGHYEMKYPEVFQHGSARNVPAGTYIPLDKVVEVYRKQHLDEEERKAKKLAAAN.

The transit peptide at 1–26 (MSSFRLGVSRVARQVRAPCVRNTRRY) directs the protein to the mitochondrion. The tract at residues 22 to 49 (NTRRYASDSHAPADHTHSAAGHGEHHHA) is disordered. Residues 26–49 (YASDSHAPADHTHSAAGHGEHHHA) are compositionally biased toward basic and acidic residues. Residues 58 to 78 (LGTAFYVIFGAIPAFGALYYF) form a helical membrane-spanning segment.

As to quaternary structure, complex I is composed of about 40 different subunits.

It is found in the mitochondrion inner membrane. It catalyses the reaction a ubiquinone + NADH + 5 H(+)(in) = a ubiquinol + NAD(+) + 4 H(+)(out). Functionally, transfer of electrons from NADH to the respiratory chain. The immediate electron acceptor for the enzyme is believed to be ubiquinone. The protein is NADH-ubiquinone oxidoreductase 17.8 kDa subunit, mitochondrial (nuo17.8) of Neurospora crassa (strain ATCC 24698 / 74-OR23-1A / CBS 708.71 / DSM 1257 / FGSC 987).